Here is a 232-residue protein sequence, read N- to C-terminus: Fibrillarin-like rRNA/tRNA 2'-O-methyltransferase (232 aa).

Residues 89 to 90, 108 to 109, 133 to 134, and 153 to 156 contribute to the S-adenosyl-L-methionine site; these read TT, EF, DA, and DIAQ.

Belongs to the methyltransferase superfamily. Fibrillarin family. As to quaternary structure, interacts with nop5. Component of box C/D small ribonucleoprotein (sRNP) particles that contain rpl7ae, FlpA and nop5, plus a guide RNA.

In terms of biological role, involved in pre-rRNA and tRNA processing. Utilizes the methyl donor S-adenosyl-L-methionine to catalyze the site-specific 2'-hydroxyl methylation of ribose moieties in rRNA and tRNA. Site specificity is provided by a guide RNA that base pairs with the substrate. Methylation occurs at a characteristic distance from the sequence involved in base pairing with the guide RNA. The chain is Fibrillarin-like rRNA/tRNA 2'-O-methyltransferase from Methanopyrus kandleri (strain AV19 / DSM 6324 / JCM 9639 / NBRC 100938).